The sequence spans 420 residues: UDP-N-acetyl-D-mannosamine dehydrogenase (420 aa).

Tyr13, Ile14, Asp33, Thr85, and Thr126 together coordinate NAD(+). UDP-N-acetyl-alpha-D-mannosaminouronate contacts are provided by Arg160, Val161, Lys212, Asn216, Arg219, His250, Arg252, and Gly263. Lys212 functions as the Proton donor/acceptor in the catalytic mechanism. Cys266 (nucleophile) is an active-site residue. 2 residues coordinate UDP-N-acetyl-alpha-D-mannosaminouronate: Phe330 and Lys331. Arg338 is a binding site for NAD(+). Residue Lys416 coordinates UDP-N-acetyl-alpha-D-mannosaminouronate.

It belongs to the UDP-glucose/GDP-mannose dehydrogenase family. WecC subfamily. As to quaternary structure, homodimer.

The enzyme catalyses UDP-N-acetyl-alpha-D-mannosamine + 2 NAD(+) + H2O = UDP-N-acetyl-alpha-D-mannosaminouronate + 2 NADH + 3 H(+). It participates in bacterial outer membrane biogenesis; enterobacterial common antigen biosynthesis. In terms of biological role, catalyzes the four-electron oxidation of UDP-N-acetyl-D-mannosamine (UDP-ManNAc), reducing NAD(+) and releasing UDP-N-acetylmannosaminuronic acid (UDP-ManNAcA). This Shigella flexneri protein is UDP-N-acetyl-D-mannosamine dehydrogenase.